Here is a 211-residue protein sequence, read N- to C-terminus: Imidazole glycerol phosphate synthase subunit HisH (211 aa).

In terms of domain architecture, Glutamine amidotransferase type-1 spans 1 to 206; it reads MIGIIDYGRG…GKWVNEDATV (206 aa). The active-site Nucleophile is the Cys79. Active-site residues include His181 and Glu183.

In terms of assembly, heterodimer of HisH and HisF.

The protein localises to the cytoplasm. The catalysed reaction is 5-[(5-phospho-1-deoxy-D-ribulos-1-ylimino)methylamino]-1-(5-phospho-beta-D-ribosyl)imidazole-4-carboxamide + L-glutamine = D-erythro-1-(imidazol-4-yl)glycerol 3-phosphate + 5-amino-1-(5-phospho-beta-D-ribosyl)imidazole-4-carboxamide + L-glutamate + H(+). The enzyme catalyses L-glutamine + H2O = L-glutamate + NH4(+). It functions in the pathway amino-acid biosynthesis; L-histidine biosynthesis; L-histidine from 5-phospho-alpha-D-ribose 1-diphosphate: step 5/9. Its function is as follows. IGPS catalyzes the conversion of PRFAR and glutamine to IGP, AICAR and glutamate. The HisH subunit catalyzes the hydrolysis of glutamine to glutamate and ammonia as part of the synthesis of IGP and AICAR. The resulting ammonia molecule is channeled to the active site of HisF. The protein is Imidazole glycerol phosphate synthase subunit HisH of Desulfitobacterium hafniense (strain DSM 10664 / DCB-2).